The sequence spans 57 residues: Enolase (57 aa).

The Proton donor role is filled by Glu-25.

Belongs to the enolase family. Mg(2+) serves as cofactor.

It localises to the cytoplasm. The protein resides in the secreted. It is found in the cell surface. It catalyses the reaction (2R)-2-phosphoglycerate = phosphoenolpyruvate + H2O. It participates in carbohydrate degradation; glycolysis; pyruvate from D-glyceraldehyde 3-phosphate: step 4/5. Its function is as follows. Catalyzes the reversible conversion of 2-phosphoglycerate (2-PG) into phosphoenolpyruvate (PEP). It is essential for the degradation of carbohydrates via glycolysis. This chain is Enolase, found in Clostridioides difficile (Peptoclostridium difficile).